Reading from the N-terminus, the 622-residue chain is Glutamyl-tRNA(Gln) amidotransferase subunit B, mitochondrial (622 aa).

The transit peptide at methionine 1 to histidine 54 directs the protein to the mitochondrion. Residues lysine 30–leucine 67 are disordered. Positions threonine 57 to leucine 67 are enriched in low complexity.

This sequence belongs to the GatB/GatE family. GatB subfamily. As to quaternary structure, subunit of the heterotrimeric GatCAB amidotransferase (AdT) complex, composed of A, B and C subunits.

Its subcellular location is the mitochondrion. It carries out the reaction L-glutamyl-tRNA(Gln) + L-glutamine + ATP + H2O = L-glutaminyl-tRNA(Gln) + L-glutamate + ADP + phosphate + H(+). Functionally, allows the formation of correctly charged Gln-tRNA(Gln) through the transamidation of misacylated Glu-tRNA(Gln) in the mitochondria. The reaction takes place in the presence of glutamine and ATP through an activated gamma-phospho-Glu-tRNA(Gln). The chain is Glutamyl-tRNA(Gln) amidotransferase subunit B, mitochondrial from Verticillium alfalfae (strain VaMs.102 / ATCC MYA-4576 / FGSC 10136) (Verticillium wilt of alfalfa).